The primary structure comprises 599 residues: Sulfite reductase [NADPH] flavoprotein alpha-component (599 aa).

The Flavodoxin-like domain occupies 64 to 202; that stretch reads ITIISASQTG…AASEWRARVV (139 aa). Residues 70–75, 117–120, and 153–162 contribute to the FMN site; these read SQTGNA, STQG, and LGDSSYEFFC. The FAD-binding FR-type domain maps to 234–448; the sequence is DAPLAASLSV…IEHNDNFRLP (215 aa). FAD contacts are provided by residues Thr322, Ala356, 386–389, 404–406, Tyr410, and 419–422; these read RLYS, TVG, and GGAS. NADP(+)-binding positions include 519 to 520, 525 to 529, and Asp561; these read SR and KIYVQ. Position 599 (Tyr599) interacts with FAD.

The protein belongs to the NADPH-dependent sulphite reductase flavoprotein subunit CysJ family. This sequence in the N-terminal section; belongs to the flavodoxin family. It in the C-terminal section; belongs to the flavoprotein pyridine nucleotide cytochrome reductase family. Alpha(8)-beta(8). The alpha component is a flavoprotein, the beta component is a hemoprotein. FAD serves as cofactor. The cofactor is FMN.

It carries out the reaction hydrogen sulfide + 3 NADP(+) + 3 H2O = sulfite + 3 NADPH + 4 H(+). It functions in the pathway sulfur metabolism; hydrogen sulfide biosynthesis; hydrogen sulfide from sulfite (NADPH route): step 1/1. In terms of biological role, component of the sulfite reductase complex that catalyzes the 6-electron reduction of sulfite to sulfide. This is one of several activities required for the biosynthesis of L-cysteine from sulfate. The flavoprotein component catalyzes the electron flow from NADPH -&gt; FAD -&gt; FMN to the hemoprotein component. In Escherichia coli O6:K15:H31 (strain 536 / UPEC), this protein is Sulfite reductase [NADPH] flavoprotein alpha-component.